A 231-amino-acid polypeptide reads, in one-letter code: 5'-methylthioadenosine/S-adenosylhomocysteine nucleosidase (231 aa).

Glu-12 (proton acceptor) is an active-site residue. Residues Gly-78, Met-153, and 174–175 each bind substrate; that span reads ME. Asp-198 serves as the catalytic Proton donor.

Belongs to the PNP/UDP phosphorylase family. MtnN subfamily.

The catalysed reaction is S-adenosyl-L-homocysteine + H2O = S-(5-deoxy-D-ribos-5-yl)-L-homocysteine + adenine. It carries out the reaction S-methyl-5'-thioadenosine + H2O = 5-(methylsulfanyl)-D-ribose + adenine. The enzyme catalyses 5'-deoxyadenosine + H2O = 5-deoxy-D-ribose + adenine. It participates in amino-acid biosynthesis; L-methionine biosynthesis via salvage pathway; S-methyl-5-thio-alpha-D-ribose 1-phosphate from S-methyl-5'-thioadenosine (hydrolase route): step 1/2. Functionally, catalyzes the irreversible cleavage of the glycosidic bond in both 5'-methylthioadenosine (MTA) and S-adenosylhomocysteine (SAH/AdoHcy) to adenine and the corresponding thioribose, 5'-methylthioribose and S-ribosylhomocysteine, respectively. Also cleaves 5'-deoxyadenosine, a toxic by-product of radical S-adenosylmethionine (SAM) enzymes, into 5-deoxyribose and adenine. This chain is 5'-methylthioadenosine/S-adenosylhomocysteine nucleosidase, found in Bacillus velezensis (strain DSM 23117 / BGSC 10A6 / LMG 26770 / FZB42) (Bacillus amyloliquefaciens subsp. plantarum).